The primary structure comprises 491 residues: MTFQQNEPSAVPAQSSLSFTQGFLLGQLSVVLLIGAFIKFFIFGEAPPPPSRGLSHRASTHRRSNSIYTINPNEGTSRSLREKPSTSNVLRPVPSSATNTRSILRKTYYSAIPTNPSGKHGRHRIHHSSHQPESLDWFNVLIAQTIAQYRQTAYLLKDDPTSSILSSLTAALNNPEKKPSFIDKIAVTDISLGEEFPIFSNCRIIAVDDPNSDGGRLQALLDVDLSDDNLSIAVETSLLLNYPKPCSAILPVALSISIVRFSGTLCISLVPASTPPLHTPSPSPSPPTADGAVNAGIHPTNGSREPTQEAPNAQEESPPKTSPKSNVAFSFLPDYRLDLSVRSLIGSRSRLQDVPKVAQLVEARVHSWFEERVVEPRVQVVGLPDLWPRMGRTGVRTGEDSETGSNAASRSAMSADMGNSLRADDIGREPDGLRFRGLGARPPFDSVSRTSSFNVETGGFRSHSMTREGSGGGMSDDFHMPGTLPGGAAAN.

The Lumenal segment spans residues 1 to 22 (MTFQQNEPSAVPAQSSLSFTQG). The helical transmembrane segment at 23 to 43 (FLLGQLSVVLLIGAFIKFFIF) threads the bilayer. Residues 44 to 491 (GEAPPPPSRG…GTLPGGAAAN (448 aa)) lie on the Cytoplasmic side of the membrane. 3 disordered regions span residues 50–95 (PSRG…PVPS), 275–325 (PPLH…SPKS), and 392–491 (RTGV…AAAN). The segment covering 54–64 (LSHRASTHRRS) has biased composition (basic residues). 2 stretches are compositionally biased toward polar residues: residues 65 to 78 (NSIYTINPNEGTSR) and 85 to 95 (STSNVLRPVPS). In terms of domain architecture, SMP-LTD spans 131–384 (QPESLDWFNV…EPRVQVVGLP (254 aa)). The segment covering 275-287 (PPLHTPSPSPSPP) has biased composition (pro residues). Polar residues-rich tracts occupy residues 300–315 (TNGSREPTQEAPNAQE) and 403–412 (TGSNAASRSA). The segment covering 422-434 (RADDIGREPDGLR) has biased composition (basic and acidic residues).

This sequence belongs to the MMM1 family. As to quaternary structure, homodimer. Component of the ER-mitochondria encounter structure (ERMES) or MDM complex, composed of mmm1, mdm10, mdm12 and mdm34. A mmm1 homodimer associates with one molecule of mdm12 on each side in a pairwise head-to-tail manner, and the SMP-LTD domains of mmm1 and mdm12 generate a continuous hydrophobic tunnel for phospholipid trafficking.

The protein localises to the endoplasmic reticulum membrane. Its function is as follows. Component of the ERMES/MDM complex, which serves as a molecular tether to connect the endoplasmic reticulum (ER) and mitochondria. Components of this complex are involved in the control of mitochondrial shape and protein biogenesis, and function in nonvesicular lipid trafficking between the ER and mitochondria. The mdm12-mmm1 subcomplex functions in the major beta-barrel assembly pathway that is responsible for biogenesis of all outer membrane beta-barrel proteins, and acts in a late step after the SAM complex. The mdm10-mdm12-mmm1 subcomplex further acts in the TOM40-specific pathway after the action of the mdm12-mmm1 complex. Essential for establishing and maintaining the structure of mitochondria and maintenance of mtDNA nucleoids. The protein is Maintenance of mitochondrial morphology protein 1 of Aspergillus flavus (strain ATCC 200026 / FGSC A1120 / IAM 13836 / NRRL 3357 / JCM 12722 / SRRC 167).